A 292-amino-acid polypeptide reads, in one-letter code: Histamine N-methyltransferase (292 aa).

Residue Glu-28 participates in substrate binding. Positions 60, 89, 94, 120, and 142 each coordinate S-adenosyl-L-methionine. Residue Asn-283 coordinates substrate.

Belongs to the class I-like SAM-binding methyltransferase superfamily. HNMT family. As to quaternary structure, monomer.

The protein localises to the cytoplasm. It catalyses the reaction histamine + S-adenosyl-L-methionine = N(tau)-methylhistamine + S-adenosyl-L-homocysteine + H(+). In terms of biological role, inactivates histamine by N-methylation. Plays an important role in degrading histamine and in regulating the airway response to histamine. The sequence is that of Histamine N-methyltransferase (HNMT) from Homo sapiens (Human).